The chain runs to 350 residues: 2-oxoglutarate-dependent ethylene/succinate-forming enzyme (350 aa).

In terms of domain architecture, Fe2OG dioxygenase spans 166–286 (GWHHMRVLRF…RFACAYFHEP (121 aa)). Positions 189 and 268 each coordinate Fe cation.

It belongs to the iron/ascorbate-dependent oxidoreductase family. In terms of assembly, monomer. Fe(2+) is required as a cofactor.

The enzyme catalyses 2-oxoglutarate + O2 + 2 H(+) = ethene + 3 CO2 + H2O. It catalyses the reaction L-arginine + 2-oxoglutarate + O2 = guanidine + L-glutamate 5-semialdehyde + succinate + CO2. Its pathway is alkene biosynthesis; ethylene biosynthesis via 2-oxoglutarate. Simultaneously catalyzes two reactions, namely formation of ethylene and of succinate from 2-oxoglutarate. The polypeptide is 2-oxoglutarate-dependent ethylene/succinate-forming enzyme (efe) (Pseudomonas amygdali pv. sesami (Pseudomonas syringae pv. sesami)).